The sequence spans 289 residues: ATP phosphoribosyltransferase (289 aa).

This sequence belongs to the ATP phosphoribosyltransferase family. Long subfamily. It depends on Mg(2+) as a cofactor.

It localises to the cytoplasm. The enzyme catalyses 1-(5-phospho-beta-D-ribosyl)-ATP + diphosphate = 5-phospho-alpha-D-ribose 1-diphosphate + ATP. It functions in the pathway amino-acid biosynthesis; L-histidine biosynthesis; L-histidine from 5-phospho-alpha-D-ribose 1-diphosphate: step 1/9. With respect to regulation, feedback inhibited by histidine. In terms of biological role, catalyzes the condensation of ATP and 5-phosphoribose 1-diphosphate to form N'-(5'-phosphoribosyl)-ATP (PR-ATP). Has a crucial role in the pathway because the rate of histidine biosynthesis seems to be controlled primarily by regulation of HisG enzymatic activity. The polypeptide is ATP phosphoribosyltransferase (Desulforudis audaxviator (strain MP104C)).